Here is a 253-residue protein sequence, read N- to C-terminus: 1-(5-phosphoribosyl)-5-[(5-phosphoribosylamino)methylideneamino] imidazole-4-carboxamide isomerase (253 aa).

Residue Asp8 is the Proton acceptor of the active site. Asp129 serves as the catalytic Proton donor.

It belongs to the HisA/HisF family.

Its subcellular location is the cytoplasm. It catalyses the reaction 1-(5-phospho-beta-D-ribosyl)-5-[(5-phospho-beta-D-ribosylamino)methylideneamino]imidazole-4-carboxamide = 5-[(5-phospho-1-deoxy-D-ribulos-1-ylimino)methylamino]-1-(5-phospho-beta-D-ribosyl)imidazole-4-carboxamide. It participates in amino-acid biosynthesis; L-histidine biosynthesis; L-histidine from 5-phospho-alpha-D-ribose 1-diphosphate: step 4/9. This Microcystis aeruginosa (strain NIES-843 / IAM M-2473) protein is 1-(5-phosphoribosyl)-5-[(5-phosphoribosylamino)methylideneamino] imidazole-4-carboxamide isomerase.